We begin with the raw amino-acid sequence, 71 residues long: Small ribosomal subunit protein bS21 (71 aa).

This sequence belongs to the bacterial ribosomal protein bS21 family.

The protein is Small ribosomal subunit protein bS21 of Shewanella piezotolerans (strain WP3 / JCM 13877).